The chain runs to 482 residues: Regulator of nonsense transcripts UPF3 (482 aa).

The interval 9–14 is binds to UPF2; that stretch reads KVVVRH. Residues 9-219 form a necessary for interaction with UPF2 region; it reads KVVVRHLPPS…EKESSKNVPR (211 aa). The sufficient for association with EJC core stretch occupies residues 53–482; it reads YSRAYVSFKA…MWIQKPSSGT (430 aa). The tract at residues 173-482 is disordered; the sequence is PQGLSDIRRG…MWIQKPSSGT (310 aa). Basic and acidic residues predominate over residues 201–214; that stretch reads RNSEKKKYVEKESS. Composition is skewed to polar residues over residues 223–239, 292–308, and 325–336; these read ADVS…NSSG, DTNL…NQKS, and RPSQSSTFVQSE. Basic and acidic residues-rich tracts occupy residues 337–348 and 370–394; these read QRVEPSEAENYK and EKQE…RDGS. Residues 414-435 show a composition bias toward polar residues; sequence SQRSGEVVNSSGGHTLENGSAR.

This sequence belongs to the RENT3 family. Found in a post-splicing messenger ribonucleoprotein (mRNP) complex. Associates with the exon junction complex (EJC). Interacts with CPL1/FRY2.

The protein resides in the nucleus. The protein localises to the nucleolus. It is found in the cytoplasm. In terms of biological role, recruits UPF2 at the cytoplasmic side of the nuclear envelope and the subsequent formation of an UPF1-UPF2-UPF3 surveillance complex (including UPF1 bound to release factors at the stalled ribosome) is believed to activate NMD. Binds spliced mRNA upstream of exon-exon junctions. Involved in nonsense-mediated decay (NMD) of mRNAs containing premature stop codons (premature termination codon PTC) by associating with the nuclear exon junction complex (EJC) and serving as link between the EJC core and NMD machinery. Eliminates the production of nonsense-containing RNAs (ncRNAs). Required for plant development and adaptation to environmental stresses, including plant defense and response to wounding. The protein is Regulator of nonsense transcripts UPF3 of Arabidopsis thaliana (Mouse-ear cress).